The sequence spans 425 residues: Serine--tRNA ligase (425 aa).

230–232 serves as a coordination point for L-serine; that stretch reads TAE. 261–263 lines the ATP pocket; the sequence is RQE. Glu-284 is an L-serine binding site. Position 348 to 351 (348 to 351) interacts with ATP; sequence EISS. Ser-384 contributes to the L-serine binding site.

The protein belongs to the class-II aminoacyl-tRNA synthetase family. Type-1 seryl-tRNA synthetase subfamily. In terms of assembly, homodimer. The tRNA molecule binds across the dimer.

Its subcellular location is the cytoplasm. The catalysed reaction is tRNA(Ser) + L-serine + ATP = L-seryl-tRNA(Ser) + AMP + diphosphate + H(+). It catalyses the reaction tRNA(Sec) + L-serine + ATP = L-seryl-tRNA(Sec) + AMP + diphosphate + H(+). It functions in the pathway aminoacyl-tRNA biosynthesis; selenocysteinyl-tRNA(Sec) biosynthesis; L-seryl-tRNA(Sec) from L-serine and tRNA(Sec): step 1/1. In terms of biological role, catalyzes the attachment of serine to tRNA(Ser). Is also able to aminoacylate tRNA(Sec) with serine, to form the misacylated tRNA L-seryl-tRNA(Sec), which will be further converted into selenocysteinyl-tRNA(Sec). The polypeptide is Serine--tRNA ligase (Caldanaerobacter subterraneus subsp. tengcongensis (strain DSM 15242 / JCM 11007 / NBRC 100824 / MB4) (Thermoanaerobacter tengcongensis)).